We begin with the raw amino-acid sequence, 120 residues long: Large ribosomal subunit protein uL18 (120 aa).

Belongs to the universal ribosomal protein uL18 family. In terms of assembly, part of the 50S ribosomal subunit; part of the 5S rRNA/L5/L18/L25 subcomplex. Contacts the 5S and 23S rRNAs.

This is one of the proteins that bind and probably mediate the attachment of the 5S RNA into the large ribosomal subunit, where it forms part of the central protuberance. In Gluconacetobacter diazotrophicus (strain ATCC 49037 / DSM 5601 / CCUG 37298 / CIP 103539 / LMG 7603 / PAl5), this protein is Large ribosomal subunit protein uL18.